The sequence spans 601 residues: Tubulin polyglutamylase ttll-4 (601 aa).

The span at 1 to 18 (MSSGYSSAPSVSHTSSDT) shows a compositional bias: polar residues. A disordered region spans residues 1–37 (MSSGYSSAPSVSHTSSDTDLNRIDSYDDGAEETTDEQ). The region spanning 138–476 (QARLTWCHNS…YVPPSFDKLS (339 aa)) is the TTL domain. ATP contacts are provided by residues Lys254, 260-261 (RG), 282-285 (QHYI), and 295-297 (KFD). Residue Arg260 participates in a protein binding. Arg321 is an L-glutamate binding site. 342 to 343 (TN) contacts ATP. Positions 344, 345, and 362 each coordinate L-glutamate. Mg(2+) is bound by residues Asp422, Glu435, and Asn437. Residue Lys453 coordinates L-glutamate.

Belongs to the tubulin--tyrosine ligase family. The cofactor is Mg(2+). As to expression, expressed in many sensory neurons in amphid.

It carries out the reaction L-glutamyl-[protein] + L-glutamate + ATP = gamma-L-glutamyl-L-glutamyl-[protein] + ADP + phosphate + H(+). Monoglutamylase which modifies tubulin, adding a single glutamate on the gamma-carboxyl group of specific glutamate residues of target proteins. Involved in the side-chain initiation step of the polyglutamylation reaction but not in the elongation step. Preferentially modifies beta-tail tubulin over the alpha-tubulin. Involved in side-chain glutamylation of tubulin in sensory cilia. Together with ttll-5 and ttll-11, required for male mating. In Caenorhabditis elegans, this protein is Tubulin polyglutamylase ttll-4.